Consider the following 540-residue polypeptide: Chaperonin GroEL 4 (540 aa).

Residues 29–32 (TLGP), 86–90 (DGTTT), glycine 413, 477–479 (NAA), and aspartate 493 each bind ATP.

It belongs to the chaperonin (HSP60) family. As to quaternary structure, forms a cylinder of 14 subunits composed of two heptameric rings stacked back-to-back. Interacts with the co-chaperonin GroES.

The protein localises to the cytoplasm. The enzyme catalyses ATP + H2O + a folded polypeptide = ADP + phosphate + an unfolded polypeptide.. Together with its co-chaperonin GroES, plays an essential role in assisting protein folding. The GroEL-GroES system forms a nano-cage that allows encapsulation of the non-native substrate proteins and provides a physical environment optimized to promote and accelerate protein folding. The protein is Chaperonin GroEL 4 of Frankia casuarinae (strain DSM 45818 / CECT 9043 / HFP020203 / CcI3).